A 238-amino-acid chain; its full sequence is Group 3 late-embryogenesis abundant protein, mitochondrial (238 aa).

A disordered region spans residues 41 to 62 (SSGSGRPADNWAESQKEKAKAG). Residues 50–202 (NWAESQKEKA…AGDLKDKAQQ (153 aa)) are a coiled coil. LEA 11-mer repeat repeat units lie at residues 64 to 74 (KDAQAEVGKVA), 89 to 99 (KDAVKQGANDL), 140 to 150 (KEAAENAWEKT), 151 to 161 (KDVAENLKDKV), 179 to 189 (KDRAQDAASEV), and 190 to 200 (KHKAGDLKDKA). Composition is skewed to basic and acidic residues over residues 182–200 (AQDA…KDKA) and 213–225 (DNRK…RRDS). Residues 182–238 (AQDAASEVKHKAGDLKDKAQQVIHDATTQSGDNRKQDQQQRRDSQGSQSGQNSRSRN) form a disordered region. The span at 226–238 (QGSQSGQNSRSRN) shows a compositional bias: low complexity.

It belongs to the LEA type 4 family.

The protein localises to the mitochondrion. Mitochondrial heat soluble protein acting as a molecular shield in water-deficient condition. This chain is Group 3 late-embryogenesis abundant protein, mitochondrial, found in Hypsibius exemplaris (Freshwater tardigrade).